Reading from the N-terminus, the 347-residue chain is Protein YIPF3 (347 aa).

Residues M1–G28 are disordered. A2 is modified (N-acetylalanine). Topologically, residues A2–K145 are cytoplasmic. A helical transmembrane segment spans residues V146–H166. Over G167–A184 the chain is Lumenal. Residues I185–L205 form a helical membrane-spanning segment. Topologically, residues C206 to T211 are cytoplasmic. Residues M212–Y234 traverse the membrane as a helical segment. At N235–H237 the chain is on the lumenal side. A helical transmembrane segment spans residues L238–V260. Topologically, residues L261–R271 are cytoplasmic. A helical membrane pass occupies residues L272 to A292. Over Y293–H347 the chain is Lumenal. An N-linked (GlcNAc...) asparagine glycan is attached at N334.

It belongs to the YIP1 family. In terms of assembly, interacts with YIPF4 and YIPF5.

The protein localises to the cell membrane. It localises to the golgi apparatus. It is found in the cis-Golgi network membrane. The protein resides in the cytoplasm. In terms of biological role, involved in the maintenance of the Golgi structure. May play a role in hematopoiesis. This Rattus norvegicus (Rat) protein is Protein YIPF3 (Yipf3).